The primary structure comprises 193 residues: NADH-quinone oxidoreductase subunit B (193 aa).

4 residues coordinate [4Fe-4S] cluster: C72, C73, C137, and C167.

This sequence belongs to the complex I 20 kDa subunit family. In terms of assembly, NDH-1 is composed of 14 different subunits. Subunits NuoB, C, D, E, F, and G constitute the peripheral sector of the complex. Requires [4Fe-4S] cluster as cofactor.

The protein localises to the cell inner membrane. It carries out the reaction a quinone + NADH + 5 H(+)(in) = a quinol + NAD(+) + 4 H(+)(out). NDH-1 shuttles electrons from NADH, via FMN and iron-sulfur (Fe-S) centers, to quinones in the respiratory chain. The immediate electron acceptor for the enzyme in this species is believed to be ubiquinone. Couples the redox reaction to proton translocation (for every two electrons transferred, four hydrogen ions are translocated across the cytoplasmic membrane), and thus conserves the redox energy in a proton gradient. This chain is NADH-quinone oxidoreductase subunit B, found in Phenylobacterium zucineum (strain HLK1).